The primary structure comprises 197 residues: Imidazoleglycerol-phosphate dehydratase (197 aa).

The protein belongs to the imidazoleglycerol-phosphate dehydratase family.

The protein localises to the cytoplasm. The catalysed reaction is D-erythro-1-(imidazol-4-yl)glycerol 3-phosphate = 3-(imidazol-4-yl)-2-oxopropyl phosphate + H2O. It participates in amino-acid biosynthesis; L-histidine biosynthesis; L-histidine from 5-phospho-alpha-D-ribose 1-diphosphate: step 6/9. This Syntrophobacter fumaroxidans (strain DSM 10017 / MPOB) protein is Imidazoleglycerol-phosphate dehydratase.